Reading from the N-terminus, the 240-residue chain is Cysteine-rich venom protein (240 aa).

Residues 1-19 (MIAFIVLPILAAVLHQSSG) form the signal peptide. Residues 39–166 (DLHNSLRRSV…KYRYFYVCQY (128 aa)) enclose the SCP domain. Cystine bridges form between Cys-75-Cys-153, Cys-92-Cys-167, Cys-148-Cys-164, Cys-186-Cys-193, Cys-189-Cys-198, Cys-202-Cys-235, Cys-211-Cys-229, and Cys-220-Cys-233. Residues 202–235 (CTQENTYSNCNSLVQQSSCQDNNMKTKCPASCFC) enclose the ShKT domain.

The protein belongs to the CRISP family. As to expression, expressed by the venom gland.

It localises to the secreted. Functionally, may block ryanodine receptors (RYR). The polypeptide is Cysteine-rich venom protein (Protobothrops mucrosquamatus (Taiwan habu)).